A 437-amino-acid chain; its full sequence is Sodium/bile acid cotransporter 4 (437 aa).

Residues 1–103 (MDGNDNVTLL…LPFWDTPLNH (103 aa)) lie on the Extracellular side of the membrane. N-linked (GlcNAc...) asparagine glycosylation is found at N6, N18, and N24. Positions 37-82 (APASSAGPGPGLSLGPGPSFGFSPGPTPTPEPTTSGLAGGAASHGP) are disordered. Over residues 51–60 (GPGPSFGFSP) the composition is skewed to low complexity. The helical transmembrane segment at 104–124 (GLNVFVGAALCITMLGLGCTV) threads the bilayer. The Cytoplasmic segment spans residues 125–140 (DVNHFGAHVRRPVGAL). The chain crosses the membrane as a helical span at residues 141-161 (LAALCQFGLLPLLAFLLALAF). Topologically, residues 162–197 (KLDEVAAVAVLLCGCCPGGNLSNLMSLLVDGDMNLS) are extracellular. N-linked (GlcNAc...) asparagine glycosylation is found at N181 and N195. A helical membrane pass occupies residues 198–218 (IIMTISSTLLALVLMPLCLWI). Topologically, residues 219–233 (YSWAWINTPIVQLLP) are cytoplasmic. The helical transmembrane segment at 234–254 (LGTVTLTLCSTLIPIGLGVFI) threads the bilayer. Topologically, residues 255-267 (RYKYSRVADYIVK) are extracellular. A helical membrane pass occupies residues 268–288 (VSLWSLLVTLVVLFIMTGTML). Residues 289 to 291 (GPE) are Cytoplasmic-facing. Residues 292 to 312 (LLASIPAAVYVIAIFMPLAGY) traverse the membrane as a helical segment. The Extracellular segment spans residues 313-360 (ASGYGLATLFHLPPNCKRTVCLETGSQNVQLCTAILKLAFPPQFIGSM). Residues 361-381 (YMFPLLYALFQSAEAGIFVLI) traverse the membrane as a helical segment. At 382 to 437 (YKMYGSEMLHKRDPLDEDEDTDISYKKLKEEEMADTSYGTVKAENIIMMETAQTSL) the chain is on the cytoplasmic side.

It belongs to the bile acid:sodium symporter (BASS) (TC 2.A.28) family. Activated following N-terminal proteolytic cleavage by thrombin and/or proteases. In terms of tissue distribution, highly expressed in brain and small intestine, and moderately expressed in colon, heart, prostate, and testis. Very low levels were detected in kidney, liver, ovary, placenta, spleen, and thymus.

It localises to the cell membrane. In terms of biological role, transporter for bile acids. In Homo sapiens (Human), this protein is Sodium/bile acid cotransporter 4 (SLC10A4).